A 616-amino-acid chain; its full sequence is Chaperone protein HscA (616 aa).

The protein belongs to the heat shock protein 70 family.

Its function is as follows. Chaperone involved in the maturation of iron-sulfur cluster-containing proteins. Has a low intrinsic ATPase activity which is markedly stimulated by HscB. Involved in the maturation of IscU. The chain is Chaperone protein HscA from Salmonella agona (strain SL483).